A 299-amino-acid polypeptide reads, in one-letter code: Zeta-sarcoglycan (299 aa).

The Cytoplasmic portion of the chain corresponds to 1-37; the sequence is MTREQYILATQQNNLPRTENAQLYPVGIYGWRKRCLY. The chain crosses the membrane as a helical; Signal-anchor for type II membrane protein span at residues 38-58; that stretch reads FFVLLLLVTMIVNLAMTIWIL. The Extracellular portion of the chain corresponds to 59–299; the sequence is KVMNFTVDGM…QSSSNICLWS (241 aa). N-linked (GlcNAc...) asparagine glycosylation is found at Asn-62 and Asn-110. Cys-273 and Cys-289 are disulfide-bonded.

This sequence belongs to the sarcoglycan beta/delta/gamma/zeta family.

The protein resides in the cell membrane. It is found in the sarcolemma. The protein localises to the cytoplasm. It localises to the cytoskeleton. Component of the sarcoglycan complex, a subcomplex of the dystrophin-glycoprotein complex which forms a link between the F-actin cytoskeleton and the extracellular matrix. May play a role in the maintenance of striated muscle membrane stability. This Homo sapiens (Human) protein is Zeta-sarcoglycan (SGCZ).